Reading from the N-terminus, the 520-residue chain is Glutamate--cysteine ligase (520 aa).

Belongs to the glutamate--cysteine ligase type 1 family. Type 1 subfamily.

It catalyses the reaction L-cysteine + L-glutamate + ATP = gamma-L-glutamyl-L-cysteine + ADP + phosphate + H(+). It functions in the pathway sulfur metabolism; glutathione biosynthesis; glutathione from L-cysteine and L-glutamate: step 1/2. The sequence is that of Glutamate--cysteine ligase from Leptospira interrogans serogroup Icterohaemorrhagiae serovar copenhageni (strain Fiocruz L1-130).